Reading from the N-terminus, the 343-residue chain is Fructose-bisphosphate aldolase (343 aa).

A D-glyceraldehyde 3-phosphate-binding site is contributed by S53. D95 (proton donor) is an active-site residue. Positions 96, 131, 161, and 212 each coordinate Zn(2+). G213 contributes to the dihydroxyacetone phosphate binding site. Residue H252 coordinates Zn(2+). Dihydroxyacetone phosphate is bound by residues 253–255 (GGS) and 274–277 (NIDT).

Belongs to the class II fructose-bisphosphate aldolase family. The cofactor is Zn(2+).

It catalyses the reaction beta-D-fructose 1,6-bisphosphate = D-glyceraldehyde 3-phosphate + dihydroxyacetone phosphate. It functions in the pathway carbohydrate degradation; glycolysis; D-glyceraldehyde 3-phosphate and glycerone phosphate from D-glucose: step 4/4. Catalyzes the aldol condensation of dihydroxyacetone phosphate (DHAP or glycerone-phosphate) with glyceraldehyde 3-phosphate (G3P) to form fructose 1,6-bisphosphate (FBP) in gluconeogenesis and the reverse reaction in glycolysis. The polypeptide is Fructose-bisphosphate aldolase (fba) (Streptomyces coelicolor (strain ATCC BAA-471 / A3(2) / M145)).